The sequence spans 99 residues: UPF0473 protein LEUM_0559 (99 aa).

It belongs to the UPF0473 family.

The sequence is that of UPF0473 protein LEUM_0559 from Leuconostoc mesenteroides subsp. mesenteroides (strain ATCC 8293 / DSM 20343 / BCRC 11652 / CCM 1803 / JCM 6124 / NCDO 523 / NBRC 100496 / NCIMB 8023 / NCTC 12954 / NRRL B-1118 / 37Y).